A 297-amino-acid polypeptide reads, in one-letter code: UBX domain-containing protein 1 (297 aa).

Alanine 2 bears the N-acetylalanine mark. Residues 2–42 (AELTALESLIEMGFPRGRAEKALALTGNQGIEAAMDWLMEH) form the UBA domain. Residues 38-214 (WLMEHEDDPD…PPTKREYDQC (177 aa)) form a disordered region. Over residues 42 to 52 (HEDDPDVDEPL) the composition is skewed to acidic residues. The interval 43-297 (EDDPDVDEPL…VLIVAKKCPS (255 aa)) is interaction with BRCA1. Composition is skewed to basic and acidic residues over residues 86–122 (LTEE…EREK) and 137–177 (KLQE…ERAK). Serine 199 carries the phosphoserine modification. Position 200 is a phosphoserine; by MAPK12 (serine 200). Phosphothreonine occurs at positions 207 and 229. Residues 209–291 (REYDQCRIQV…GLVPSAVLIV (83 aa)) form the UBX domain. Serine 270 carries the post-translational modification Phosphoserine.

As to quaternary structure, interacts with MAVS; this interaction prevents MAVS oligomerization and thus disrupts the RLR signaling pathway. Interacts with CUL1; this interaction inhibits CUL1-mediated degradation of NF-kappa-B inhibitors. Interacts with BIRC2/c-IAP1; this interaction prevents TNFalpha-stimulated RIP1 ubiquitination and subsequent NF-kappa-B activation. Component of a complex required to couple retrotranslocation, ubiquitination and deglycosylation composed of NGLY1, SAKS1, AMFR, VCP and RAD23B. Interacts with HOMER2. Interacts directly with VCP. Interacts with BRCA1 and BARD1; interaction takes place when BRCA1 is not autoubiquitinated but is strongly enhanced in the presence of autoubiquitinated BRCA1.

It is found in the cytoplasm. Functionally, ubiquitin-binding protein that plays a role in the modulation of innate immune response. Blocks both the RIG-I-like receptors (RLR) and NF-kappa-B pathways. Following viral infection, UBXN1 is induced and recruited to the RLR component MAVS. In turn, interferes with MAVS oligomerization, and disrupts the MAVS/TRAF3/TRAF6 signalosome. This function probably serves as a brake to prevent excessive RLR signaling. Interferes with the TNFalpha-triggered NF-kappa-B pathway by interacting with cellular inhibitors of apoptosis proteins (cIAPs) and thereby inhibiting their recruitment to TNFR1. Also prevents the activation of NF-kappa-B by associating with CUL1 and thus inhibiting NF-kappa-B inhibitor alpha/NFKBIA degradation that remains bound to NF-kappa-B. Interacts with the BRCA1-BARD1 heterodimer and regulates its activity. Specifically binds 'Lys-6'-linked polyubiquitin chains. Interaction with autoubiquitinated BRCA1 leads to the inhibition of the E3 ubiquitin-protein ligase activity of the BRCA1-BARD1 heterodimer. Component of a complex required to couple deglycosylation and proteasome-mediated degradation of misfolded proteins in the endoplasmic reticulum that are retrotranslocated in the cytosol. The chain is UBX domain-containing protein 1 (Ubxn1) from Mus musculus (Mouse).